Reading from the N-terminus, the 221-residue chain is Serotriflin (221 aa).

In terms of domain architecture, SCP spans 19-147; the sequence is LDKHNALRRS…SYNYYYVCHY (129 aa). N-linked (GlcNAc...) asparagine glycosylation is present at Asn48. 8 cysteine pairs are disulfide-bonded: Cys56–Cys134, Cys73–Cys148, Cys129–Cys145, Cys167–Cys174, Cys170–Cys179, Cys183–Cys216, Cys192–Cys210, and Cys201–Cys214. The 34-residue stretch at 183–216 folds into the ShKT domain; it reads CKHVDRYSNCNSLVQQISCQSNNMNTDCPASCFC.

As to quaternary structure, forms a stable, non-covalent complex with SSP-2.

It localises to the secreted. The protein is Serotriflin of Protobothrops flavoviridis (Habu).